The primary structure comprises 90 residues: Cell division topological specificity factor 2 (90 aa).

It belongs to the MinE family.

Prevents the cell division inhibition by proteins MinC and MinD at internal division sites while permitting inhibition at polar sites. This ensures cell division at the proper site by restricting the formation of a division septum at the midpoint of the long axis of the cell. In Syntrophomonas wolfei subsp. wolfei (strain DSM 2245B / Goettingen), this protein is Cell division topological specificity factor 2.